Reading from the N-terminus, the 143-residue chain is Large-conductance mechanosensitive channel (143 aa).

3 consecutive transmembrane segments (helical) span residues 10–30 (FAVK…GAFG), 40–60 (VIMP…LFLV), and 86–106 (GSFI…FMMV).

Belongs to the MscL family. As to quaternary structure, homopentamer.

It is found in the cell inner membrane. Its function is as follows. Channel that opens in response to stretch forces in the membrane lipid bilayer. May participate in the regulation of osmotic pressure changes within the cell. In Paracidovorax citrulli (strain AAC00-1) (Acidovorax citrulli), this protein is Large-conductance mechanosensitive channel.